The following is a 129-amino-acid chain: Ribosome-binding factor A (129 aa).

The protein belongs to the RbfA family. In terms of assembly, monomer. Binds 30S ribosomal subunits, but not 50S ribosomal subunits or 70S ribosomes.

Its subcellular location is the cytoplasm. Functionally, one of several proteins that assist in the late maturation steps of the functional core of the 30S ribosomal subunit. Associates with free 30S ribosomal subunits (but not with 30S subunits that are part of 70S ribosomes or polysomes). Required for efficient processing of 16S rRNA. May interact with the 5'-terminal helix region of 16S rRNA. This chain is Ribosome-binding factor A, found in Gloeobacter violaceus (strain ATCC 29082 / PCC 7421).